The chain runs to 500 residues: Proline/betaine transporter (500 aa).

Residues 1 to 37 (MLKRKKVKPITLRDVTIIDDGKLRKAITAASLGNAME) are Cytoplasmic-facing. A helical transmembrane segment spans residues 38 to 58 (WFDFGVYGFVAYALGKVFFPG). The Periplasmic segment spans residues 59–65 (ADPSVQM). A helical membrane pass occupies residues 66–86 (VAALATFSVPFLIRPLGGLFF). At 87 to 97 (GMLGDKYGRQK) the chain is on the cytoplasmic side. A helical membrane pass occupies residues 98 to 118 (ILAITIVIMSISTFCIGLIPS). Over 119-121 (YDT) the chain is Periplasmic. The chain crosses the membrane as a helical span at residues 122–142 (IGIWAPILLLICKMAQGFSVG). The Cytoplasmic segment spans residues 143-169 (GEYTGASIFVAEYSPDRKRGFMGSWLD). Residues 170 to 190 (FGSIAGFVLGAGVVVLISTIV) traverse the membrane as a helical segment. The Periplasmic portion of the chain corresponds to 191-194 (GEAN). The helical transmembrane segment at 195 to 215 (FLDWGWRIPFFIALPLGIIGL) threads the bilayer. Over 216–260 (YLRHALEETPAFQQHVDKLEQGDREGLQDGPKVSFKEIATKYWRS) the chain is Cytoplasmic. A helical membrane pass occupies residues 261–281 (LLTCIGLVIATNVTYYMLLTY). Topologically, residues 282-297 (MPSYLSHNLHYSEDHG) are periplasmic. Residues 298–318 (VLIIIAIMIGMLFVQPVMGLL) traverse the membrane as a helical segment. The Cytoplasmic portion of the chain corresponds to 319–325 (SDRFGRR). The helical transmembrane segment at 326–346 (PFVLLGSVALFVLAIPAFILI) threads the bilayer. The Periplasmic portion of the chain corresponds to 347–350 (NSNV). Residues 351–371 (IGLIFAGLLMLAVILNCFTGV) traverse the membrane as a helical segment. The Cytoplasmic segment spans residues 372–390 (MASTLPAMFPTHIRYSALA). Residues 391-411 (AAFNISVLVAGLTPTLAAWLV) form a helical membrane-spanning segment. Topologically, residues 412-416 (ESSQN) are periplasmic. A helical membrane pass occupies residues 417-437 (LMMPAYYLMVVAVVGLITGVT). Over 438–500 (MKETANRPLK…LVQQHPRIDE (63 aa)) the chain is Cytoplasmic. Residues 453–498 (ASDIQEAKEILVEHYDNIEQKIDDIDHEIADLQAKRTRLVQQHPRI) are a coiled coil.

This sequence belongs to the major facilitator superfamily. Metabolite:H+ Symporter (MHS) family (TC 2.A.1.6) family.

The protein resides in the cell inner membrane. Proton symporter that senses osmotic shifts and responds by importing osmolytes such as proline, glycine betaine, stachydrine, pipecolic acid, ectoine and taurine. It is both an osmosensor and an osmoregulator which is available to participate early in the bacterial osmoregulatory response. The sequence is that of Proline/betaine transporter (proP) from Escherichia coli O157:H7.